We begin with the raw amino-acid sequence, 420 residues long: Gamma-glutamyl phosphate reductase (420 aa).

It belongs to the gamma-glutamyl phosphate reductase family.

The protein localises to the cytoplasm. It catalyses the reaction L-glutamate 5-semialdehyde + phosphate + NADP(+) = L-glutamyl 5-phosphate + NADPH + H(+). It functions in the pathway amino-acid biosynthesis; L-proline biosynthesis; L-glutamate 5-semialdehyde from L-glutamate: step 2/2. Catalyzes the NADPH-dependent reduction of L-glutamate 5-phosphate into L-glutamate 5-semialdehyde and phosphate. The product spontaneously undergoes cyclization to form 1-pyrroline-5-carboxylate. This is Gamma-glutamyl phosphate reductase from Streptococcus pneumoniae (strain CGSP14).